Here is a 580-residue protein sequence, read N- to C-terminus: Multidrug resistance-like ATP-binding protein MdlB (580 aa).

Residues 25-310 (LILAFIFLLS…ITIQQSVLQQ (286 aa)) form the ABC transmembrane type-1 domain. Helical transmembrane passes span 26–46 (ILAF…PILI), 61–81 (LLII…SVFL), 150–170 (IILI…MALV), 173–193 (FILP…TPLL), 247–267 (LDGF…LCNF), and 268–288 (MFLF…YAFI). In terms of domain architecture, ABC transporter spans 341-575 (INIQNVSFYH…KSCYYKMYKF (235 aa)). 375–382 (GHTGSGKS) serves as a coordination point for ATP.

It belongs to the ABC transporter superfamily. Drug exporter-2 (TC 3.A.1.117) family.

The protein resides in the cell membrane. It carries out the reaction ATP + H2O + xenobioticSide 1 = ADP + phosphate + xenobioticSide 2.. This is Multidrug resistance-like ATP-binding protein MdlB (mdlB) from Buchnera aphidicola subsp. Acyrthosiphon pisum (strain APS) (Acyrthosiphon pisum symbiotic bacterium).